The chain runs to 212 residues: Ribosomal RNA small subunit methyltransferase G (212 aa).

S-adenosyl-L-methionine is bound by residues G80, L85, 131–132, and R146; that span reads AE.

The protein belongs to the methyltransferase superfamily. RNA methyltransferase RsmG family.

It is found in the cytoplasm. It carries out the reaction guanosine(527) in 16S rRNA + S-adenosyl-L-methionine = N(7)-methylguanosine(527) in 16S rRNA + S-adenosyl-L-homocysteine. Specifically methylates the N7 position of guanine in position 527 of 16S rRNA. This Stenotrophomonas maltophilia (strain R551-3) protein is Ribosomal RNA small subunit methyltransferase G.